The following is a 557-amino-acid chain: Urocanate hydratase (557 aa).

NAD(+) contacts are provided by residues 48–49, glutamine 126, 178–180, aspartate 198, arginine 203, 244–245, 265–269, 274–275, and tyrosine 323; these read GG, GMG, NA, QTSAH, and YL. Residue cysteine 411 is part of the active site. NAD(+) is bound at residue glycine 493.

The protein belongs to the urocanase family. NAD(+) serves as cofactor.

It is found in the cytoplasm. The catalysed reaction is 4-imidazolone-5-propanoate = trans-urocanate + H2O. Its pathway is amino-acid degradation; L-histidine degradation into L-glutamate; N-formimidoyl-L-glutamate from L-histidine: step 2/3. Catalyzes the conversion of urocanate to 4-imidazolone-5-propionate. The polypeptide is Urocanate hydratase (Beutenbergia cavernae (strain ATCC BAA-8 / DSM 12333 / CCUG 43141 / JCM 11478 / NBRC 16432 / NCIMB 13614 / HKI 0122)).